The following is a 122-amino-acid chain: Small ribosomal subunit protein uS13 (122 aa).

Positions 98–116 are enriched in basic residues; that stretch reads VRGQKTKTNARTRKGRRKT. The interval 98 to 122 is disordered; the sequence is VRGQKTKTNARTRKGRRKTVGAATK.

It belongs to the universal ribosomal protein uS13 family. As to quaternary structure, part of the 30S ribosomal subunit. Forms a loose heterodimer with protein S19. Forms two bridges to the 50S subunit in the 70S ribosome.

Its function is as follows. Located at the top of the head of the 30S subunit, it contacts several helices of the 16S rRNA. In the 70S ribosome it contacts the 23S rRNA (bridge B1a) and protein L5 of the 50S subunit (bridge B1b), connecting the 2 subunits; these bridges are implicated in subunit movement. Contacts the tRNAs in the A and P-sites. This chain is Small ribosomal subunit protein uS13, found in Campylobacter fetus subsp. fetus (strain 82-40).